Reading from the N-terminus, the 335-residue chain is MIEADRLIQPTALREDEVIDRAIRPKMLADYTGQDHVCEQMDIFIQAARKRSDALDHLLIFGPPGLGKTTLANIVANEMGVSIKTTSGPVLEKAGDLAALLTNLEENDVLFIDEIHRLSPVVEEILYPAMEDYQLDIMIGEGPAARSIKLELPPFTLIGATTRAGSLTSPLRDRFGIVQRLEFYNIKDLTQIVKRSAHFLELNLDEEGAMEIAKRSRGTPRISNRLLRRVRDYAEIKANGEISSDVASAALDMLDVDKEGFDYMDRKLLTTIIDKFMGGPVGLDNLAAAIGEERDTIEDVIEPFLIQQGFLQRTPRGRIVSQRAYLHFGYDYEPN.

The segment at 4–184 (ADRLIQPTAL…FGIVQRLEFY (181 aa)) is large ATPase domain (RuvB-L). Residues isoleucine 23, arginine 24, glycine 65, lysine 68, threonine 69, threonine 70, 131–133 (EDY), arginine 174, tyrosine 184, and arginine 221 contribute to the ATP site. Threonine 69 contacts Mg(2+). Residues 185-255 (NIKDLTQIVK…VASAALDMLD (71 aa)) form a small ATPAse domain (RuvB-S) region. Positions 258–335 (KEGFDYMDRK…LHFGYDYEPN (78 aa)) are head domain (RuvB-H). Residues arginine 294, arginine 313, and arginine 318 each coordinate DNA.

Belongs to the RuvB family. Homohexamer. Forms an RuvA(8)-RuvB(12)-Holliday junction (HJ) complex. HJ DNA is sandwiched between 2 RuvA tetramers; dsDNA enters through RuvA and exits via RuvB. An RuvB hexamer assembles on each DNA strand where it exits the tetramer. Each RuvB hexamer is contacted by two RuvA subunits (via domain III) on 2 adjacent RuvB subunits; this complex drives branch migration. In the full resolvosome a probable DNA-RuvA(4)-RuvB(12)-RuvC(2) complex forms which resolves the HJ.

It localises to the cytoplasm. The enzyme catalyses ATP + H2O = ADP + phosphate + H(+). Functionally, the RuvA-RuvB-RuvC complex processes Holliday junction (HJ) DNA during genetic recombination and DNA repair, while the RuvA-RuvB complex plays an important role in the rescue of blocked DNA replication forks via replication fork reversal (RFR). RuvA specifically binds to HJ cruciform DNA, conferring on it an open structure. The RuvB hexamer acts as an ATP-dependent pump, pulling dsDNA into and through the RuvAB complex. RuvB forms 2 homohexamers on either side of HJ DNA bound by 1 or 2 RuvA tetramers; 4 subunits per hexamer contact DNA at a time. Coordinated motions by a converter formed by DNA-disengaged RuvB subunits stimulates ATP hydrolysis and nucleotide exchange. Immobilization of the converter enables RuvB to convert the ATP-contained energy into a lever motion, pulling 2 nucleotides of DNA out of the RuvA tetramer per ATP hydrolyzed, thus driving DNA branch migration. The RuvB motors rotate together with the DNA substrate, which together with the progressing nucleotide cycle form the mechanistic basis for DNA recombination by continuous HJ branch migration. Branch migration allows RuvC to scan DNA until it finds its consensus sequence, where it cleaves and resolves cruciform DNA. This is Holliday junction branch migration complex subunit RuvB from Pseudoalteromonas atlantica (strain T6c / ATCC BAA-1087).